A 379-amino-acid chain; its full sequence is Cytochrome b (379 aa).

The next 8 membrane-spanning stretches (helical) occupy residues 33 to 53 (FGSL…FLAM), 77 to 98 (WLIR…FLHV), 113 to 133 (WNIG…GYVL), 178 to 198 (FFAF…VHLL), 226 to 246 (IKDV…VLFS), 288 to 308 (LGGV…PILH), 320 to 340 (LSQC…WIGG), and 347 to 367 (FITI…LALP). Heme b contacts are provided by H83 and H97. H182 and H196 together coordinate heme b.

Belongs to the cytochrome b family. The cytochrome bc1 complex contains 11 subunits: 3 respiratory subunits (MT-CYB, CYC1 and UQCRFS1), 2 core proteins (UQCRC1 and UQCRC2) and 6 low-molecular weight proteins (UQCRH/QCR6, UQCRB/QCR7, UQCRQ/QCR8, UQCR10/QCR9, UQCR11/QCR10 and a cleavage product of UQCRFS1). This cytochrome bc1 complex then forms a dimer. It depends on heme b as a cofactor.

The protein resides in the mitochondrion inner membrane. Component of the ubiquinol-cytochrome c reductase complex (complex III or cytochrome b-c1 complex) that is part of the mitochondrial respiratory chain. The b-c1 complex mediates electron transfer from ubiquinol to cytochrome c. Contributes to the generation of a proton gradient across the mitochondrial membrane that is then used for ATP synthesis. This Sciurus niger (Eastern fox squirrel) protein is Cytochrome b (MT-CYB).